Reading from the N-terminus, the 818-residue chain is SIT4-associating protein SAP4 (818 aa).

Disordered stretches follow at residues 33–60 and 499–526; these read ETSS…RDRS and TSNT…KNIK. Residues 509 to 518 show a composition bias toward low complexity; sequence NNDSNDSNDN.

This sequence belongs to the SAPS family. In terms of processing, hyperphosphorylated in the absence of SIT4.

Functionally, associates with the SIT4 phosphatase in a cell cycle dependent manner. May be directly or indirectly involved in SIT4-dependent functions in budding and in normal G1 cyclin expression. This is SIT4-associating protein SAP4 (SAP4) from Saccharomyces cerevisiae (strain ATCC 204508 / S288c) (Baker's yeast).